An 889-amino-acid chain; its full sequence is DNA mismatch repair protein MutS (889 aa).

Gly-620–Ser-627 contacts ATP. Positions Ala-812–Gly-831 are disordered.

The protein belongs to the DNA mismatch repair MutS family.

Functionally, this protein is involved in the repair of mismatches in DNA. It is possible that it carries out the mismatch recognition step. This protein has a weak ATPase activity. In Syntrophobacter fumaroxidans (strain DSM 10017 / MPOB), this protein is DNA mismatch repair protein MutS.